Reading from the N-terminus, the 248-residue chain is 3-deoxy-manno-octulosonate cytidylyltransferase (248 aa).

It belongs to the KdsB family.

The protein localises to the cytoplasm. It catalyses the reaction 3-deoxy-alpha-D-manno-oct-2-ulosonate + CTP = CMP-3-deoxy-beta-D-manno-octulosonate + diphosphate. The protein operates within nucleotide-sugar biosynthesis; CMP-3-deoxy-D-manno-octulosonate biosynthesis; CMP-3-deoxy-D-manno-octulosonate from 3-deoxy-D-manno-octulosonate and CTP: step 1/1. It participates in bacterial outer membrane biogenesis; lipopolysaccharide biosynthesis. In terms of biological role, activates KDO (a required 8-carbon sugar) for incorporation into bacterial lipopolysaccharide in Gram-negative bacteria. The sequence is that of 3-deoxy-manno-octulosonate cytidylyltransferase from Cronobacter sakazakii (strain ATCC BAA-894) (Enterobacter sakazakii).